Here is a 387-residue protein sequence, read N- to C-terminus: Small ribosomal subunit protein uS5m (387 aa).

The transit peptide at 1-22 directs the protein to the mitochondrion; the sequence is MLRSFSHFLQIGSRRQPTYFRC. A disordered region spans residues 33-87; that stretch reads FKNDPKKELNSNLNEKSVEESSKNETKEQFNSSSIPRESESEGKTASNTSPLSPK. Basic and acidic residues predominate over residues 48 to 60; sequence KSVEESSKNETKE. S85 is subject to Phosphoserine. The S5 DRBM domain occupies 225 to 288; the sequence is LMFVPLVRRR…GRAVKNMVYI (64 aa).

The protein belongs to the universal ribosomal protein uS5 family. In terms of assembly, component of the mitochondrial small ribosomal subunit (mt-SSU). Mature yeast 74S mitochondrial ribosomes consist of a small (37S) and a large (54S) subunit. The 37S small subunit contains a 15S ribosomal RNA (15S mt-rRNA) and at least 32 different proteins. The 54S large subunit contains a 21S rRNA (21S mt-rRNA) and at least 45 different proteins. uS3m, uS4m and uS5m form the narrow entry site of the mRNA channel.

It localises to the mitochondrion. In terms of biological role, component of the mitochondrial ribosome (mitoribosome), a dedicated translation machinery responsible for the synthesis of mitochondrial genome-encoded proteins, including at least some of the essential transmembrane subunits of the mitochondrial respiratory chain. The mitoribosomes are attached to the mitochondrial inner membrane and translation products are cotranslationally integrated into the membrane. This Schizosaccharomyces pombe (strain 972 / ATCC 24843) (Fission yeast) protein is Small ribosomal subunit protein uS5m (mrp5).